We begin with the raw amino-acid sequence, 341 residues long: NADH-ubiquinone oxidoreductase chain 2 (341 aa).

The next 8 helical transmembrane spans lie at 8–28 (IFFI…SWLG), 61–81 (FLTQ…MMMF), 95–117 (LLIL…FPGV), 145–165 (LNIN…ALGG), 195–215 (LLWL…ILMF), 238–258 (FFMF…GFLP), 266–286 (LVEM…LITL), and 320–340 (ILTM…IYLI).

The protein belongs to the complex I subunit 2 family.

The protein localises to the mitochondrion inner membrane. It carries out the reaction a ubiquinone + NADH + 5 H(+)(in) = a ubiquinol + NAD(+) + 4 H(+)(out). In terms of biological role, core subunit of the mitochondrial membrane respiratory chain NADH dehydrogenase (Complex I) that is believed to belong to the minimal assembly required for catalysis. Complex I functions in the transfer of electrons from NADH to the respiratory chain. The immediate electron acceptor for the enzyme is believed to be ubiquinone. The chain is NADH-ubiquinone oxidoreductase chain 2 from Aedes aegypti (Yellowfever mosquito).